The following is a 479-amino-acid chain: Ribosomal RNA small subunit methyltransferase F (479 aa).

S-adenosyl-L-methionine contacts are provided by residues 125–131 (AAAPGSK), Glu149, Asp176, and Asp194. Residue Cys247 is the Nucleophile of the active site.

Belongs to the class I-like SAM-binding methyltransferase superfamily. RsmB/NOP family.

It localises to the cytoplasm. It catalyses the reaction cytidine(1407) in 16S rRNA + S-adenosyl-L-methionine = 5-methylcytidine(1407) in 16S rRNA + S-adenosyl-L-homocysteine + H(+). Functionally, specifically methylates the cytosine at position 1407 (m5C1407) of 16S rRNA. This Salmonella arizonae (strain ATCC BAA-731 / CDC346-86 / RSK2980) protein is Ribosomal RNA small subunit methyltransferase F.